We begin with the raw amino-acid sequence, 603 residues long: Spastin (603 aa).

The tract at residues 1–34 (MNSPGGRNNKKKPVTPAAETGPGPPTPPPPPAET) is disordered. Residues 1-54 (MNSPGGRNNKKKPVTPAAETGPGPPTPPPPPAETQVLLAPPSLHKRNLYLFSYP) are Cytoplasmic-facing. Pro residues predominate over residues 22 to 32 (PGPPTPPPPPA). An intramembrane region (helical) is located at residues 55–75 (LLAAFSLLRFLAFQLGLLFVW). Residues 76–603 (FCERLSRRVM…WNKEFGDTTV (528 aa)) are Cytoplasmic-facing. Residues 113–188 (YHQQAFQYIS…LMAKDRLQLL (76 aa)) enclose the MIT domain. The disordered stretch occupies residues 216–294 (GLLKPEKGAV…RTNKPTTPTT (79 aa)). Over residues 219-231 (KPEKGAVPKKKDP) the composition is skewed to basic and acidic residues. Residues 281-294 (KNNTRTNKPTTPTT) show a composition bias toward low complexity. 369 to 376 (GPPGNGKT) serves as a coordination point for ATP.

The protein belongs to the AAA ATPase family. Spastin subfamily. Homohexamer. The homohexamer is stabilized by ATP-binding. The homohexamer may adopt a ring conformation through which microtubules pass prior to being severed. Interacts with microtubules.

It is found in the membrane. Its subcellular location is the cytoplasm. The protein localises to the cytoskeleton. It localises to the microtubule organizing center. The protein resides in the centrosome. It is found in the perinuclear region. Its subcellular location is the nucleus. The catalysed reaction is n ATP + n H2O + a microtubule = n ADP + n phosphate + (n+1) alpha/beta tubulin heterodimers.. In terms of biological role, ATP-dependent microtubule severing protein that specifically recognizes and cuts microtubules that are polyglutamylated. Preferentially recognizes and acts on microtubules decorated with short polyglutamate tails: severing activity increases as the number of glutamates per tubulin rises from one to eight, but decreases beyond this glutamylation threshold. Microtubule severing promotes reorganization of cellular microtubule arrays and the release of microtubules from the centrosome following nucleation. Required for membrane traffic from the endoplasmic reticulum (ER) to the Golgi and for completion of the abscission stage of cytokinesis. Also plays a role in axon growth and the formation of axonal branches. The sequence is that of Spastin from Xenopus tropicalis (Western clawed frog).